The sequence spans 467 residues: 3-isopropylmalate dehydratase large subunit (467 aa).

3 residues coordinate [4Fe-4S] cluster: C348, C409, and C412. Residues 423–448 are disordered; the sequence is NERSISTSNRNFEGRQGKGSRTHLAS.

The protein belongs to the aconitase/IPM isomerase family. LeuC type 1 subfamily. As to quaternary structure, heterodimer of LeuC and LeuD. [4Fe-4S] cluster serves as cofactor.

The catalysed reaction is (2R,3S)-3-isopropylmalate = (2S)-2-isopropylmalate. It functions in the pathway amino-acid biosynthesis; L-leucine biosynthesis; L-leucine from 3-methyl-2-oxobutanoate: step 2/4. In terms of biological role, catalyzes the isomerization between 2-isopropylmalate and 3-isopropylmalate, via the formation of 2-isopropylmaleate. The protein is 3-isopropylmalate dehydratase large subunit of Bifidobacterium longum (strain DJO10A).